The following is an 861-amino-acid chain: Integrator complex subunit 6-like (861 aa).

The region spanning 3–227 (ILLFLIDTSA…QCLESLVQKV (225 aa)) is the VWFA domain. Ser617 is subject to Phosphoserine.

This is Integrator complex subunit 6-like (Ints6l) from Mus musculus (Mouse).